Here is a 558-residue protein sequence, read N- to C-terminus: Chaperonin GroEL 1 (558 aa).

ATP is bound by residues 29-32 (TLGP), 86-90 (DGTTT), G413, and D494.

It belongs to the chaperonin (HSP60) family. Forms a cylinder of 14 subunits composed of two heptameric rings stacked back-to-back. Interacts with the co-chaperonin GroES.

Its subcellular location is the cytoplasm. The enzyme catalyses ATP + H2O + a folded polypeptide = ADP + phosphate + an unfolded polypeptide.. Together with its co-chaperonin GroES, plays an essential role in assisting protein folding. The GroEL-GroES system forms a nano-cage that allows encapsulation of the non-native substrate proteins and provides a physical environment optimized to promote and accelerate protein folding. This Acaryochloris marina (strain MBIC 11017) protein is Chaperonin GroEL 1.